The primary structure comprises 54 residues: Putative ankyrin repeat protein RC0701 (54 aa).

Residues 17–46 (SGKTPLDWYSDYNATKIVETLIKNGGNVSS) form an ANK repeat.

In Rickettsia conorii (strain ATCC VR-613 / Malish 7), this protein is Putative ankyrin repeat protein RC0701.